The chain runs to 276 residues: MGMLALGAMQLAAGAVFEFPSCPKDIPFSCQNSTAVADSCCFNSPGGALLQTQFWDTNPPSGPSDSWTIHGLWPDNCDGSYGQFCDKSREYSNITAILQEQGRTELLSYMKKYWPNYEGDDEEFWEHEWNKHGTCINTIEPSCYKDYSPQKEVGDYLQKTVDLFKGLDSYKALAKAGIVPDSSKTYKRSEIESALAAIHDGKKPYISCEDGALNEIWYFYNIKGNAITGEYQPIDTLTSPGCSTSGIKYLPKKSENSTASAWKFRSDKASQSVRFN.

Positions 1-17 are cleaved as a signal peptide; the sequence is MGMLALGAMQLAAGAVF. 5 cysteine pairs are disulfide-bonded: C22-C41, C30-C77, C40-C143, C85-C135, and C208-C242. N32 is a glycosylation site (N-linked (GlcNAc...) asparagine). H70 is a catalytic residue. N-linked (GlcNAc...) asparagine glycosylation occurs at N93. Residues E128 and H132 contribute to the active site. N-linked (GlcNAc...) asparagine glycosylation is present at N256.

The protein belongs to the RNase T2 family.

It carries out the reaction a ribonucleotidyl-ribonucleotide-RNA + H2O = a 3'-end 3'-phospho-ribonucleotide-RNA + a 5'-end dephospho-ribonucleoside-RNA + H(+). In Aspergillus oryzae (strain ATCC 42149 / RIB 40) (Yellow koji mold), this protein is Ribonuclease T2 (rntB).